Here is a 210-residue protein sequence, read N- to C-terminus: GRF1-interacting factor 1 (210 aa).

Over residues 135–152 the composition is skewed to low complexity; sequence ATLQHQQLHHSQLGMSSS. A disordered region spans residues 135 to 210; it reads ATLQHQQLHH…LYLKSSDDGN (76 aa). Residues 182–198 show a composition bias toward gly residues; sequence GSGGGGEGRGGSSGDGG.

It belongs to the SS18 family. Interacts with GRF1, GRF2, GRF5 and GRF9. In terms of tissue distribution, strongly expressed in actively growing and developing tissues, such as roots, upper stems, and shoot tips and flower buds. Also expressed in mature flowers. Not expressed in the shoot apical meristem (SAM). Highly accumulated in the proximal part of leaf primordia, in the key proliferative zone at the junction region between the leaf blade and leaf petiole.

In terms of biological role, transcription coactivator that plays a role in the regulation of cell expansion in leaf and cotyledons tissues. Component of a network formed by miR396, the GRFs and their interacting factors (GIFs) acting in the regulation of meristem function, at least partially through the control of cell proliferation. Appears to function synergistically with GRF1 as a transcriptional coactivator. Acts together with GRF5 for the development of appropriate leaf size and shape through the promotion and/or maintenance of cell proliferation activity in leaf primordia. Plays a role in adaxial/abaxial patterning and growth in leaf morphogenesis. GIFs are involved in the positive regulation of cell proliferation of lateral organs in a functionally redundant manner. Together with GATA18/HAN, mediates cotyledon identity by preventing ectopic root formation through the repression of PLT1 expression. In Arabidopsis thaliana (Mouse-ear cress), this protein is GRF1-interacting factor 1.